A 408-amino-acid chain; its full sequence is UDP-N-acetylglucosamine--dolichyl-phosphate N-acetylglucosaminephosphotransferase (408 aa).

At 1–10 (MWAFSELPMP) the chain is on the lumenal side. The chain crosses the membrane as a helical span at residues 11–38 (LLINLIVSLLGFVATVTLIPAFRGHFIA). At 39 to 58 (ARLCGQDLNKTSRQQIPESQ) the chain is on the cytoplasmic side. UDP-N-acetyl-alpha-D-glucosamine contacts are provided by residues 44-46 (QDL) and E56. L46 provides a ligand contact to tunicamycin A1. A helical transmembrane segment spans residues 59-78 (GVISGAVFLIILFCFIPFPF). The Lumenal segment spans residues 79–91 (LNCFVKEQCKAFP). Residues 92–118 (HHEFVALIGALLAICCMIFLGFADDVL) form a helical membrane-spanning segment. N119 provides a ligand contact to tunicamycin A1. Topologically, residues 119 to 121 (NLR) are cytoplasmic. The chain crosses the membrane as a helical span at residues 122–143 (WRHKLLLPTAASLPLLMVYFTN). K125 contacts dolichyl phosphate. Residues 144-166 (FGNTTIVVPKPFRPILGLHLDLG) lie on the Lumenal side of the membrane. Residue N146 is glycosylated (N-linked (GlcNAc...) asparagine). A helical membrane pass occupies residues 167 to 186 (ILYYVYMGLLAVFCTNAINI). A dolichyl phosphate-binding site is contributed by 178 to 186 (VFCTNAINI). N185 lines the tunicamycin A1 pocket. N185 contributes to the Mg(2+) binding site. Residues 187–192 (LAGING) lie on the Cytoplasmic side of the membrane. N191 contributes to the UDP-N-acetyl-alpha-D-glucosamine binding site. The helical transmembrane segment at 193–213 (LEAGQSLVISASIIVFNLVEL) threads the bilayer. Residues 214 to 218 (EGDCR) are Lumenal-facing. Residues 219–242 (DDHVFSLYFMIPFFFTTLGLLYHN) traverse the membrane as a helical segment. The Cytoplasmic segment spans residues 243 to 250 (WYPSRVFV). The helical transmembrane segment at 251–269 (GDTFCYFAGMTFAVVGILG) threads the bilayer. D252 contributes to the tunicamycin A1 binding site. A Mg(2+)-binding site is contributed by D252. Topologically, residues 270–271 (HF) are lumenal. The chain crosses the membrane as a helical span at residues 272–293 (SKTMLLFFMPQVFNFLYSLPQL). The Cytoplasmic portion of the chain corresponds to 294–375 (LHIIPCPRHR…LLLKVLGPIH (82 aa)). Position 301 to 303 (301 to 303 (RHR)) interacts with UDP-N-acetyl-alpha-D-glucosamine. A tunicamycin A1-binding site is contributed by R303. A helical membrane pass occupies residues 376 to 400 (ERNLTLLLLLLQILGSAITFSIRYQ). The Lumenal portion of the chain corresponds to 401–408 (LVRLFYDV).

Belongs to the glycosyltransferase 4 family. As to quaternary structure, homodimer. Requires Mg(2+) as cofactor.

It is found in the endoplasmic reticulum membrane. The catalysed reaction is a di-trans,poly-cis-dolichyl phosphate + UDP-N-acetyl-alpha-D-glucosamine = an N-acetyl-alpha-D-glucosaminyl-diphospho-di-trans,poly-cis-dolichol + UMP. The protein operates within protein modification; protein glycosylation. Inhibited by natural nucleoside antibiotic tunicamycin, which acts as a structural analog and competitor of UDP-GlcNAc. Activated by mannosylphosphoryldolichol and phospholipids such as phosphatidylglycerol and phosphatidylcholine. UDP-N-acetylglucosamine--dolichyl-phosphate N-acetylglucosaminephosphotransferase that operates in the biosynthetic pathway of dolichol-linked oligosaccharides, the glycan precursors employed in protein asparagine (N)-glycosylation. The assembly of dolichol-linked oligosaccharides begins on the cytosolic side of the endoplasmic reticulum membrane and finishes in its lumen. The sequential addition of sugars to dolichol pyrophosphate produces dolichol-linked oligosaccharides containing fourteen sugars, including two GlcNAcs, nine mannoses and three glucoses. Once assembled, the oligosaccharide is transferred from the lipid to nascent proteins by oligosaccharyltransferases. Catalyzes the initial step of dolichol-linked oligosaccharide biosynthesis, transfering GlcNAc-1-P from cytosolic UDP-GlcNAc onto the carrier lipid dolichyl phosphate (P-dolichol), yielding GlcNAc-P-P-dolichol embedded in the cytoplasmic leaflet of the endoplasmic reticulum membrane. The protein is UDP-N-acetylglucosamine--dolichyl-phosphate N-acetylglucosaminephosphotransferase of Homo sapiens (Human).